Consider the following 577-residue polypeptide: Arginine--tRNA ligase (577 aa).

A 'HIGH' region motif is present at residues 122 to 132 (PNVAKEMHVGH).

The protein belongs to the class-I aminoacyl-tRNA synthetase family. As to quaternary structure, monomer.

It localises to the cytoplasm. The enzyme catalyses tRNA(Arg) + L-arginine + ATP = L-arginyl-tRNA(Arg) + AMP + diphosphate. The polypeptide is Arginine--tRNA ligase (Escherichia coli (strain K12 / MC4100 / BW2952)).